The following is a 197-amino-acid chain: Peptide deformylase (197 aa).

Cys-106 and His-148 together coordinate Fe cation. Residue Glu-149 is part of the active site. His-152 is a Fe cation binding site.

Belongs to the polypeptide deformylase family. Fe(2+) serves as cofactor.

The enzyme catalyses N-terminal N-formyl-L-methionyl-[peptide] + H2O = N-terminal L-methionyl-[peptide] + formate. Removes the formyl group from the N-terminal Met of newly synthesized proteins. Requires at least a dipeptide for an efficient rate of reaction. N-terminal L-methionine is a prerequisite for activity but the enzyme has broad specificity at other positions. The sequence is that of Peptide deformylase from Mycobacterium marinum (strain ATCC BAA-535 / M).